The following is a 175-amino-acid chain: ATP synthase subunit b (175 aa).

Residues Gly19–Leu35 form a helical membrane-spanning segment.

This sequence belongs to the ATPase B chain family. As to quaternary structure, F-type ATPases have 2 components, F(1) - the catalytic core - and F(0) - the membrane proton channel. F(1) has five subunits: alpha(3), beta(3), gamma(1), delta(1), epsilon(1). F(0) has four main subunits: a(1), b(2) and c(10-14). The alpha and beta chains form an alternating ring which encloses part of the gamma chain. F(1) is attached to F(0) by a central stalk formed by the gamma and epsilon chains, while a peripheral stalk is formed by the delta and b chains.

Its subcellular location is the cell inner membrane. In terms of biological role, f(1)F(0) ATP synthase produces ATP from ADP in the presence of a proton or sodium gradient. F-type ATPases consist of two structural domains, F(1) containing the extramembraneous catalytic core and F(0) containing the membrane proton channel, linked together by a central stalk and a peripheral stalk. During catalysis, ATP synthesis in the catalytic domain of F(1) is coupled via a rotary mechanism of the central stalk subunits to proton translocation. Its function is as follows. Component of the F(0) channel, it forms part of the peripheral stalk, linking F(1) to F(0). The protein is ATP synthase subunit b of Chlorobium phaeobacteroides (strain BS1).